Consider the following 132-residue polypeptide: Ubiquinol-cytochrome c reductase complex assembly factor 4 (132 aa).

The signal sequence occupies residues 1 to 15 (MNRVLCAPAAGAVRA). The Mitochondrial matrix portion of the chain corresponds to 16–78 (LRLIGWASRS…GKGHQRPWWK (63 aa)). Residues 29–72 (LPGSRDRAHPAAEEEDDPDRPIEFSSSKANPHRWSVGHTMGKGH) form a disordered region. A helical transmembrane segment spans residues 79–95 (VLPLSCFLVALIIWCYL). At 96–132 (REESEADQWLRQVWGEVPEPSDRSEEPETPAAYRART) the chain is on the mitochondrial intermembrane side. The interval 110-132 (GEVPEPSDRSEEPETPAAYRART) is disordered.

The protein belongs to the UQCC4 family. As to quaternary structure, forms a complex, named COMB/coordinator of mitochondrial CYTB biogenesis, composed of UQCC1, UQCC2, UQCC4, UQCC5 and UQCC6; stabilizes nascent cytochrome b/MT-CYB and promotes its membrane insertion. Forms a complex, named COMA, composed of UQCC1, UQCC2 and UQCC4; activates MT-CYB translation. Forms a complex, named COMC, composed of UQCC1, UQCC2; UQCC3 and UQCC4; mediates MT-CYB hemylation and association with the first nuclear-encoded complex III subunit UQCRQ. Complexes COMA and COMB are bound to the mitochondrion inner membrane by UQCC4.

The protein localises to the mitochondrion inner membrane. In terms of biological role, required for the assembly and stability of the mitochondrial ubiquinol-cytochrome c reductase complex (complex III (CIII) or cytochrome b-c1 complex), a multisubunit transmembrane complex that is part of the mitochondrial electron transport chain (ETC) which drives oxidative phosphorylation. The protein is Ubiquinol-cytochrome c reductase complex assembly factor 4 of Homo sapiens (Human).